The primary structure comprises 215 residues: Na(+)-translocating NADH-quinone reductase subunit D (215 aa).

6 helical membrane passes run P14–V34, F42–I62, I72–A92, V103–M123, F131–I151, and N178–L198.

This sequence belongs to the NqrDE/RnfAE family. Composed of six subunits; NqrA, NqrB, NqrC, NqrD, NqrE and NqrF.

It is found in the cell inner membrane. The catalysed reaction is a ubiquinone + n Na(+)(in) + NADH + H(+) = a ubiquinol + n Na(+)(out) + NAD(+). Its function is as follows. NQR complex catalyzes the reduction of ubiquinone-1 to ubiquinol by two successive reactions, coupled with the transport of Na(+) ions from the cytoplasm to the periplasm. NqrA to NqrE are probably involved in the second step, the conversion of ubisemiquinone to ubiquinol. The polypeptide is Na(+)-translocating NADH-quinone reductase subunit D (Tolumonas auensis (strain DSM 9187 / NBRC 110442 / TA 4)).